Here is a 1390-residue protein sequence, read N- to C-terminus: MTMPQTDGVEFASRNNLENGDGDQVRSQWVAIERSPTCKRITTALFCKRDEQGKRSQRRVMDVSKLEDLDRRLFIDELIRHVEDDNRVLLQKIRTRTDEVGIDLPKIEVRFSDLFVEAECEVVHGKPIPTLWNAIASKLSRFTFSKQEDKISILKGVSGIIRPKRMTLLLGPPGCGKTTLLLALSGRLDPSLKTRGEVSYNGHLFSEFVPEKTSSYVSQNDLHIPELSVRETLDFSGCFQGAGSRLEMMKEISRREKLKGIVPDPDIDAYMKAASIEGSKTNLQTDYILKILGLTICADTRVGDASRPGISGGQKRRLTTGEMIVGPIKTLFMDEISNGLDSSTTFQILSCLQQFARLSEGTILVSLLQPAPETFELFDDLILMGEGKIIYHGPRDFICSFFEDCGFKCPQRKSVAEFLQEVISRKDQEQYWCHRDKPYCYVSIDSFIEKFKKSDLGLQLQDELSKTYDKSQTQKDGLCIRKYSLSNWDMFKACSRREFLLMKRNSFVYVFKSGLLIFIGSIAMTVYLRTGSTRDSLHANYLLGSLFFSLIKLLADGLPELTLTVSRIAVFCKQKELYFYPAWAYAIPSAILKIPISFLESFLWTMLTYYVIGYSPEAGRFIRQVLILFALHLSCISMFRAIGAVFRDFDVATTIGSISIVLLSVFGGFIVRKPSMPSWLEWGFWLSPLSYAEIGLTSNEFFAPMWRKMTSENRTLGEQVLDARGLNFGNQSYWNAFGALIGFTLFFNTVFALALTFLKTSQRSRVIVSHDKNTQSSEKDSKIASHSKNALPFEPLTFTFQDVQYFIETPQGKKLQLLSDVTGAFKPGVLTALMGVSGAGKTTLLDVLSGRKTRGDIKGQIEVGGYVKVQDTFSRVSGYCEQFDIHSPNLTVQESLKYSAWLRLPCNISSETKSAIVNEVLETIELEEIKDSLVGVPGISGVTAEQRKRLTIAVELVSNPSIIFMDEPTTGLDARAAAIVMRAVKNIAETGRTVVCTIHQPSIDIFEAFDELILMKNGGKIIYYGPLGQHSSKVIEYFMSIPGVPKLKENSNPATWILDITSKSSEDKLGVDLAHIYEESTLFKENKMVIEQTRCTSLGSERLILSSRYAQTSWEQFKACLWKQHLSYWRNPSYNLTRIIFMCFTCMLCGILFLQKAKEINNQQDLFNVFGSMFTVVLFSGINNCSTVIFCVATERNVFYRERFSRMYNPWAYSLAQVLVEIPYSLFQSIIYVIIVYPMVGYHWSVYKVFWSFYSIFCSLLIFNYFGMLLVVVTPNVHIAFTLRSSFYAIVNLFAGYVMPKPNIPRWWIWMYYLSPTSWVLNGLLTSQYGDMEKEILAFGEKKKVSAFLEDYFGYRYDSLALVAVVLIAFPILLASLFAFFIGKLNFQKK.

Residues 1-22 form a disordered region; it reads MTMPQTDGVEFASRNNLENGDG. One can recognise an ABC transporter 1 domain in the interval 137–411; the sequence is SKLSRFTFSK…FEDCGFKCPQ (275 aa). 171–178 contacts ATP; sequence GPPGCGKT. In terms of domain architecture, ABC transmembrane type-2 1 spans 489-701; the sequence is DMFKACSRRE…AEIGLTSNEF (213 aa). Helical transmembrane passes span 507 to 527, 541 to 561, 594 to 614, 626 to 646, 651 to 671, and 737 to 757; these read FVYV…MTVY, YLLG…LPEL, IPIS…VIGY, LILF…GAVF, VATT…GFIV, and FGAL…ALTF. The ABC transporter 2 domain maps to 798–1043; the sequence is FTFQDVQYFI…VIEYFMSIPG (246 aa). An ATP-binding site is contributed by 835 to 842; the sequence is GVSGAGKT. The ABC transmembrane type-2 2 domain occupies 1115 to 1329; that stretch reads EQFKACLWKQ…VLNGLLTSQY (215 aa). 7 helical membrane passes run 1134–1154, 1173–1193, 1218–1238, 1253–1273, 1279–1299, 1307–1327, and 1362–1382; these read YNLT…ILFL, MFTV…FCVA, VLVE…IVYP, FYSI…LVVV, IAFT…GYVM, WWIW…LLTS, and LVAV…AFFI.

Belongs to the ABC transporter superfamily. ABCG family. PDR (TC 3.A.1.205) subfamily.

Its subcellular location is the membrane. In terms of biological role, may be a general defense protein. The polypeptide is ABC transporter G family member 43 (ABCG43) (Arabidopsis thaliana (Mouse-ear cress)).